We begin with the raw amino-acid sequence, 398 residues long: Acetyl-CoA acetyltransferase (398 aa).

The residue at position 2 (S2) is an N-acetylserine. Residue C91 is the Acyl-thioester intermediate of the active site. Positions 186 and 231 each coordinate CoA. Residue Y186 coordinates K(+). The K(+) site is built by A248, A249, and A251. Residue S252 coordinates CoA. Residue V350 coordinates K(+). Active-site proton acceptor residues include H354 and C384.

It belongs to the thiolase-like superfamily. Thiolase family. Homotetramer.

Its subcellular location is the cytoplasm. It localises to the cytosol. The catalysed reaction is 2 acetyl-CoA = acetoacetyl-CoA + CoA. It participates in metabolic intermediate biosynthesis; (R)-mevalonate biosynthesis; (R)-mevalonate from acetyl-CoA: step 1/3. In terms of biological role, acetyl-CoA acetyltransferase; part of the first module of ergosterol biosynthesis pathway that includes the early steps of the pathway, conserved across all eukaryotes, and which results in the formation of mevalonate from acetyl-coenzyme A (acetyl-CoA). ERG10 catalyzes the formation of acetoacetyl-CoA from acetyl-CoA. The first module starts with the action of the cytosolic acetyl-CoA acetyltransferase ERG10 that catalyzes the formation of acetoacetyl-CoA. The hydroxymethylglutaryl-CoA synthase ERG13 then condenses acetyl-CoA with acetoacetyl-CoA to form HMG-CoA. The rate-limiting step of the early module is the reduction to mevalonate by the 3-hydroxy-3-methylglutaryl-coenzyme A (HMG-CoA) reductases HMG1 and HMG2 which are derived from a single ancestral HMGR gene by gene duplication. This Saccharomyces cerevisiae (strain ATCC 204508 / S288c) (Baker's yeast) protein is Acetyl-CoA acetyltransferase.